The sequence spans 118 residues: uncharacterized protein (118 aa).

A helical membrane pass occupies residues 95-115 (IIINLVIILAMYAPEIIGKLL).

Belongs to the M.jannaschii MJ0023/MJ0349/MJ1072/MJ1074/MJ1107/MJECL16 family.

The protein localises to the membrane. This is an uncharacterized protein from Methanocaldococcus jannaschii (strain ATCC 43067 / DSM 2661 / JAL-1 / JCM 10045 / NBRC 100440) (Methanococcus jannaschii).